A 907-amino-acid chain; its full sequence is Gamma-tubulin complex component 3 (907 aa).

N-acetylalanine is present on alanine 2. Serine 113 carries the post-translational modification Phosphoserine. Positions 210–230 (NQPSSQATTSKGVPSAVSRNM) are enriched in polar residues. The tract at residues 210-241 (NQPSSQATTSKGVPSAVSRNMTRSRREGDTGG) is disordered.

This sequence belongs to the TUBGCP family. In terms of assembly, component of the gamma-tubulin ring complex (gTuRC) consisting of TUBGCP2, TUBGCP3, TUBGCP4, TUBGCP5 and TUBGCP6 and gamma-tubulin TUBG1 or TUBG2. TUBGCP2, TUBGCP3, TUBGCP4, TUBGCP5 and TUBGCP6 assemble in a 5:5:2:1:1 stoichiometry; each is associated with a gamma-tubulin, thereby arranging 14 gamma-tubulins in a helical manner. Gamma-tubulin at the first position is blocked by TUBGCP3 at the last position, allowing 13 protafilaments to grow into a microtubule. The gTuRC (via TUBGCP3 and TUBGCP6) interacts with ACTB and MZT1; the interactions form a luminal bridge that stabilizes the initial structure during complex assembly. The gTuRC (via TUBGCP2) interacts with MZT2A/MZT2B and CDK5RAP2 (via CM1 motif); the interactions play a role in gTuRC activation. Interacts with NIN (via N-terminus); the interaction may promote recruitment of the gamma-tubulin ring complex to the centrosome. Ubiquitously expressed.

It localises to the cytoplasm. It is found in the cytoskeleton. The protein resides in the microtubule organizing center. Its subcellular location is the centrosome. Its function is as follows. Component of the gamma-tubulin ring complex (gTuRC) which mediates microtubule nucleation. The gTuRC regulates the minus-end nucleation of alpha-beta tubulin heterodimers that grow into microtubule protafilaments, a critical step in centrosome duplication and spindle formation. This Homo sapiens (Human) protein is Gamma-tubulin complex component 3 (TUBGCP3).